A 463-amino-acid chain; its full sequence is Bifunctional protein HldE (463 aa).

A ribokinase region spans residues 1 to 311 (MKKILVVGDL…EEIALILNQT (311 aa)). 191 to 194 (NRFE) contacts ATP. Asp-260 is an active-site residue. Residues 334–463 (FTNGCFDLLH…IEKIKRTCND (130 aa)) are cytidylyltransferase.

The protein in the N-terminal section; belongs to the carbohydrate kinase PfkB family. This sequence in the C-terminal section; belongs to the cytidylyltransferase family. In terms of assembly, homodimer.

It carries out the reaction D-glycero-beta-D-manno-heptose 7-phosphate + ATP = D-glycero-beta-D-manno-heptose 1,7-bisphosphate + ADP + H(+). The catalysed reaction is D-glycero-beta-D-manno-heptose 1-phosphate + ATP + H(+) = ADP-D-glycero-beta-D-manno-heptose + diphosphate. Its pathway is nucleotide-sugar biosynthesis; ADP-L-glycero-beta-D-manno-heptose biosynthesis; ADP-L-glycero-beta-D-manno-heptose from D-glycero-beta-D-manno-heptose 7-phosphate: step 1/4. It participates in nucleotide-sugar biosynthesis; ADP-L-glycero-beta-D-manno-heptose biosynthesis; ADP-L-glycero-beta-D-manno-heptose from D-glycero-beta-D-manno-heptose 7-phosphate: step 3/4. Functionally, catalyzes the phosphorylation of D-glycero-D-manno-heptose 7-phosphate at the C-1 position to selectively form D-glycero-beta-D-manno-heptose-1,7-bisphosphate. Catalyzes the ADP transfer from ATP to D-glycero-beta-D-manno-heptose 1-phosphate, yielding ADP-D-glycero-beta-D-manno-heptose. The polypeptide is Bifunctional protein HldE (Helicobacter pylori (strain G27)).